The following is a 463-amino-acid chain: MRADWIAKRRGQANVSQMHYARSGVVTEEMAFVAARERLEPELVRAEVARGRMVIPANVRHPELEPLAIGITACCKINANIGNSAVTSNIDEELAKLRVCLKYGADTVMDLSTGGDIPQIREAILRASPIPVGTVPIYECLAHVKDVADLTPELMLEIIEAQAAQGVDYMTIHAGVLRDFIPLAAHRITGIVSRGGALMAQWMLANKAENPFFTHFEQICEIFKRYDVTFSLGDGLRPGCLADASDAAQFAELKALGDLTRKAWEHGVQVMVEGPGHVPLDQIPMNMEKERELCSEAPFYVLGPLVTDIAPGYDHITSAIGAAVAAQHGAAMLCYVTPAEHLGLPDIDDVREGIVAYKIAAHAADVARHRPGARDRDDALSRARYAFDWNKQFELSLDPDTARAKHDETLPHEAFKSAEFCSMCGPKFCSMKIHGHLAEAAAAQDAAANGEAEKPAGGLQVLP.

Substrate-binding positions include N80, M109, Y138, H173, 193–195 (SRG), 234–237 (DGLR), and E273. A Zn(2+)-binding site is contributed by H277. Y300 lines the substrate pocket. Zn(2+) is bound at residue H341. The [4Fe-4S] cluster site is built by C421, C424, and C429.

Belongs to the ThiC family. Homodimer. [4Fe-4S] cluster serves as cofactor.

It catalyses the reaction 5-amino-1-(5-phospho-beta-D-ribosyl)imidazole + S-adenosyl-L-methionine = 4-amino-2-methyl-5-(phosphooxymethyl)pyrimidine + CO + 5'-deoxyadenosine + formate + L-methionine + 3 H(+). Its pathway is cofactor biosynthesis; thiamine diphosphate biosynthesis. Catalyzes the synthesis of the hydroxymethylpyrimidine phosphate (HMP-P) moiety of thiamine from aminoimidazole ribotide (AIR) in a radical S-adenosyl-L-methionine (SAM)-dependent reaction. The sequence is that of Phosphomethylpyrimidine synthase from Anaeromyxobacter dehalogenans (strain 2CP-1 / ATCC BAA-258).